The chain runs to 1819 residues: Gamma-tubulin complex component 6 (1819 aa).

Disordered regions lie at residues 810–889 (SEAH…GARP), 929–951 (LPPSAPGEAPAAASTQPSRPQEY), and 1000–1023 (RETLLPSHPPRRAALEEGSSQPTE). Tandem repeats lie at residues 1027–1053 (GQVSGGGLPTGDYASEIAPTRPRWNTH), 1054–1080 (GHVSDASIRVGENVSDVAPTQPRWNTH), 1081–1107 (GHVSNASISLGESVSDVAPTRPRWNIH), 1108–1134 (GHVSNASIRVGENVSDVAPTRPRWNTH), 1135–1161 (GHVSNASIRVGENVSDVAPTRPRWNTH), 1162–1188 (GHVSDASISLGESVSDMAPARPRWNTH), 1189–1215 (GHVSDASISLGESVSDMAPTRPRWNTH), 1216–1242 (GHVSDTSIRVGENVSDVAPIRSRCNTH), and 1243–1269 (GHVSDASISLGEPVSDVVSTRPRWNTH). A 9 X 27 AA tandem repeats region spans residues 1027-1269 (GQVSGGGLPT…VSTRPRWNTH (243 aa)). The disordered stretch occupies residues 1271–1412 (PIPPPHMVLG…EAEASAAEAQ (142 aa)). The segment covering 1297 to 1314 (PPGHTSQSALSLGAQSTV) has biased composition (polar residues). Residues 1321-1335 (LPVEVGPSLSSPSSG) are compositionally biased toward low complexity. Residues 1384-1398 (WPLNSQEDTAAQSSP) are compositionally biased toward polar residues.

This sequence belongs to the TUBGCP family. In terms of assembly, component of the gamma-tubulin ring complex (gTuRC) consisting of TUBGCP2, TUBGCP3, TUBGCP4, TUBGCP5 and TUBGCP6 and gamma-tubulin TUBG1 or TUBG2. TUBGCP2, TUBGCP3, TUBGCP4, TUBGCP5 and TUBGCP6 assemble in a 5:5:2:1:1 stoichiometry; each is associated with a gamma-tubulin, thereby arranging 14 gamma-tubulins in a helical manner. Gamma-tubulin at the first position is blocked by TUBGCP3 at the last position, allowing 13 protafilaments to grow into a microtubule. The gTuRC (via TUBGCP3 and TUBGCP6) interacts with ACTB and MZT1; the interactions form a luminal bridge that stabilizes the initial structure during complex assembly. The gTuRC (via TUBGCP2) interacts with MZT2A/MZT2B and CDK5RAP2 (via CM1 motif); the interactions play a role in gTuRC activation.

The protein resides in the cytoplasm. Its subcellular location is the cytoskeleton. The protein localises to the microtubule organizing center. It is found in the centrosome. Component of the gamma-tubulin ring complex (gTuRC) which mediates microtubule nucleation. The gTuRC regulates the minus-end nucleation of alpha-beta tubulin heterodimers that grow into microtubule protafilaments, a critical step in centrosome duplication and spindle formation. The chain is Gamma-tubulin complex component 6 (TUBGCP6) from Homo sapiens (Human).